The following is a 218-amino-acid chain: Probable nicotinate-nucleotide adenylyltransferase (218 aa).

This sequence belongs to the NadD family.

It catalyses the reaction nicotinate beta-D-ribonucleotide + ATP + H(+) = deamido-NAD(+) + diphosphate. Its pathway is cofactor biosynthesis; NAD(+) biosynthesis; deamido-NAD(+) from nicotinate D-ribonucleotide: step 1/1. In terms of biological role, catalyzes the reversible adenylation of nicotinate mononucleotide (NaMN) to nicotinic acid adenine dinucleotide (NaAD). The chain is Probable nicotinate-nucleotide adenylyltransferase from Helicobacter hepaticus (strain ATCC 51449 / 3B1).